Here is a 64-residue protein sequence, read N- to C-terminus: Large ribosomal subunit protein bL35 (64 aa).

The protein belongs to the bacterial ribosomal protein bL35 family.

This Vibrio atlanticus (strain LGP32) (Vibrio splendidus (strain Mel32)) protein is Large ribosomal subunit protein bL35.